The primary structure comprises 260 residues: 2-amino-5-formylamino-6-ribosylaminopyrimidin-4(3H)-one 5'-monophosphate deformylase (260 aa).

4 residues coordinate Fe cation: E33, H35, D44, and H112.

It belongs to the creatininase superfamily. FAPy deformylase family. In terms of assembly, homodimer. It depends on Fe(2+) as a cofactor. Requires Zn(2+) as cofactor.

The catalysed reaction is 2-amino-5-formylamino-6-(5-phospho-D-ribosylamino)pyrimidin-4(3H)-one + H2O = 2,5-diamino-6-(1-D-ribosylamino)pyrimidin-4(3H)-one 5'-phosphate + formate + H(+). It functions in the pathway cofactor biosynthesis; coenzyme F420 biosynthesis. Its pathway is cofactor biosynthesis; riboflavin biosynthesis. In terms of biological role, catalyzes the hydrolysis of the formamide of 2-amino-5-formylamino-6-ribosylamino-4(3H)-pyrimidinone 5'-monophosphate (FAPy) to form 2,5-diamino-6-ribosylamino-4(3H)-pyrimidinone 5'-phosphate (APy). The polypeptide is 2-amino-5-formylamino-6-ribosylaminopyrimidin-4(3H)-one 5'-monophosphate deformylase (Methanococcus voltae (strain ATCC BAA-1334 / A3)).